A 132-amino-acid polypeptide reads, in one-letter code: Intraflagellar transport protein 20 homolog A (132 aa).

The stretch at 87–112 forms a coiled coil; the sequence is EAQQQQLYALIAEKKMQLERYRIEYD.

The protein localises to the golgi apparatus. The protein resides in the cis-Golgi network. Its subcellular location is the cytoplasm. It is found in the cytoskeleton. It localises to the microtubule organizing center. The protein localises to the centrosome. The protein resides in the centriole. Its subcellular location is the cell projection. It is found in the cilium. In terms of biological role, involved in ciliary process assembly. May play a role in the trafficking of ciliary membrane proteins from the Golgi complex to the cilium. Regulates the platelet-derived growth factor receptor-alpha (PDGFRA) signaling pathway. Plays an important role in spermatogenesis, particularly spermiogenesis, when germ cells form flagella. The protein is Intraflagellar transport protein 20 homolog A (ift20-a) of Xenopus laevis (African clawed frog).